Here is a 150-residue protein sequence, read N- to C-terminus: FAD synthase (150 aa).

Residues 8–9 (AF), 13–16 (HPGH), Asp95, and His122 each bind ATP.

Belongs to the archaeal FAD synthase family. Homodimer. Requires a divalent metal cation as cofactor.

It catalyses the reaction FMN + ATP + H(+) = FAD + diphosphate. It participates in cofactor biosynthesis; FAD biosynthesis; FAD from FMN: step 1/1. Its function is as follows. Catalyzes the transfer of the AMP portion of ATP to flavin mononucleotide (FMN) to produce flavin adenine dinucleotide (FAD) coenzyme. The protein is FAD synthase of Methanobrevibacter ruminantium (strain ATCC 35063 / DSM 1093 / JCM 13430 / OCM 146 / M1) (Methanobacterium ruminantium).